Consider the following 61-residue polypeptide: Large ribosomal subunit protein uL30 (61 aa).

The protein belongs to the universal ribosomal protein uL30 family. In terms of assembly, part of the 50S ribosomal subunit.

In Corynebacterium aurimucosum (strain ATCC 700975 / DSM 44827 / CIP 107346 / CN-1) (Corynebacterium nigricans), this protein is Large ribosomal subunit protein uL30.